An 885-amino-acid polypeptide reads, in one-letter code: DNA mismatch repair protein MutS (885 aa).

Residue 626–633 (GPNMGGKS) participates in ATP binding.

Belongs to the DNA mismatch repair MutS family.

This protein is involved in the repair of mismatches in DNA. It is possible that it carries out the mismatch recognition step. This protein has a weak ATPase activity. This Burkholderia lata (strain ATCC 17760 / DSM 23089 / LMG 22485 / NCIMB 9086 / R18194 / 383) protein is DNA mismatch repair protein MutS.